The following is a 286-amino-acid chain: MDGVKCQFVNTNGITLHVAAAGREDGPLIVLLHGFPEFWYGWKNQIKPLVDAGYRVIAPDQRGYNLSDKPEGIDSYRIDTLRDDIIGLITQFTDEKAIVIGHDWGGAVAWHLASTRPEYLEKLIAINIPHPHVMKTVTPLYPPQWLKSSYIAYFQLPDIPEASLRENDYDTLDKAIGLSDRPALFTSEDVSRYKEAWKQPGALTAMLNWYRALRKGSLAEKPSYETVPYRMIWGMEDRFLSRKLAKETERHCPNGHLIFVDEASHWINHEKPAIVNQLILEYLKNQ.

The region spanning 27 to 272 (PLIVLLHGFP…ASHWINHEKP (246 aa)) is the AB hydrolase-1 domain. Asp-103 acts as the Nucleophile in catalysis. Catalysis depends on Tyr-210, which acts as the Proton donor. His-265 (proton acceptor) is an active-site residue.

It belongs to the AB hydrolase superfamily. Epoxide hydrolase family.

The polypeptide is AB hydrolase superfamily protein YfhM (yfhM) (Bacillus subtilis (strain 168)).